The primary structure comprises 1003 residues: Calcium-transporting ATPase sarcoplasmic/endoplasmic reticulum type (1003 aa).

The Cytoplasmic portion of the chain corresponds to 1–59; that stretch reads MEDAHAKKWEEVVDYFGVDPERGLALEQVKKNQEKYGPNELPAEEGKSLLTLILEQFDD. The helical transmembrane segment at 60-78 threads the bilayer; the sequence is LLVKILLLAAIISLVLALF. Topologically, residues 79 to 89 are extracellular; it reads EEHDDEAEQLT. The chain crosses the membrane as a helical span at residues 90-110; that stretch reads AYVEPFVILLILIANAVVGVW. The Cytoplasmic portion of the chain corresponds to 111–262; it reads QEKNAESAIE…QQKLDEFGEQ (152 aa). A helical transmembrane segment spans residues 263 to 282; sequence LSKVISVICVAVWAINIGHF. Residues 283 to 300 are Extracellular-facing; sequence NDPAHGGSWIKGAIYYFK. A helical membrane pass occupies residues 301–318; the sequence is IAVALAVAAIPEGLPAVI. Over 319 to 775 the chain is Cytoplasmic; sequence TTCLALGTRR…RYLISSNIGE (457 aa). The active-site 4-aspartylphosphate intermediate is the D354. K519 is an ATP binding site. Residues 776–799 traverse the membrane as a helical segment; it reads VVSIFLTAALGLPEALIPVQLLWV. Residues 800–840 are Extracellular-facing; it reads NLVTDGLPATALGFNPPDLDIMNKPPRRADEGLITGWLFFR. Residues 841–863 traverse the membrane as a helical segment; sequence YMAIGTYVGAATVGAAAHWFMMS. Residues 864-898 lie on the Cytoplasmic side of the membrane; it reads PTGPGLNFYQLSHHLQCTPENEYFEGIDCEIFSDP. Residues 899 to 917 traverse the membrane as a helical segment; sequence HPMTMALSVLVTIEMLNAI. Topologically, residues 918 to 934 are extracellular; it reads NSLSENQSLLVMPPWSN. A helical transmembrane segment spans residues 935–954; that stretch reads IWLISAICLSMTLHFVILYV. Over 955 to 1003 the chain is Cytoplasmic; that stretch reads EILSTVFQICPLTLTEWIVVLKISFPVLLLDEVLKFVARKYTDEFSFIK.

This sequence belongs to the cation transport ATPase (P-type) (TC 3.A.3) family.

It localises to the sarcoplasmic reticulum membrane. The catalysed reaction is Ca(2+)(in) + ATP + H2O = Ca(2+)(out) + ADP + phosphate + H(+). This magnesium-dependent enzyme catalyzes the hydrolysis of ATP coupled with the transport of the calcium. The polypeptide is Calcium-transporting ATPase sarcoplasmic/endoplasmic reticulum type (Artemia franciscana (Brine shrimp)).